We begin with the raw amino-acid sequence, 393 residues long: Transcription factor bHLH112 (393 aa).

Disordered stretches follow at residues Thr248 to Pro277 and Lys332 to His356. Basic and acidic residues predominate over residues Ser254–Ala265. The bHLH domain occupies Val270 to Leu319. The span at Lys332–Ser347 shows a compositional bias: low complexity.

In terms of assembly, homodimer.

It localises to the nucleus. This chain is Transcription factor bHLH112 (BHLH112), found in Arabidopsis thaliana (Mouse-ear cress).